The primary structure comprises 183 residues: Protein Syd (183 aa).

It belongs to the Syd family.

The protein resides in the cell inner membrane. Its function is as follows. Interacts with the SecY protein in vivo. May bind preferentially to an uncomplexed state of SecY, thus functioning either as a chelating agent for excess SecY in the cell or as a regulatory factor that negatively controls the translocase function. The polypeptide is Protein Syd (Yersinia pestis bv. Antiqua (strain Antiqua)).